The chain runs to 655 residues: Probable alpha-galactosidase D (655 aa).

Residues 1–16 (MLPKIFYLSLLPAALG) form the signal peptide. Residues Asn-47 and Asn-91 are each glycosylated (N-linked (GlcNAc...) asparagine). Cys-124 and Cys-155 are disulfide-bonded. Catalysis depends on Asp-153, which acts as the Nucleophile. Asn-180 and Asn-189 each carry an N-linked (GlcNAc...) asparagine glycan. Position 198 to 202 (198 to 202 (EWGID)) interacts with substrate. Residue Asp-220 is the Proton donor of the active site. Asn-349, Asn-436, Asn-458, Asn-503, Asn-537, Asn-541, and Asn-580 each carry an N-linked (GlcNAc...) asparagine glycan.

It belongs to the glycosyl hydrolase 27 family.

Its subcellular location is the secreted. It carries out the reaction Hydrolysis of terminal, non-reducing alpha-D-galactose residues in alpha-D-galactosides, including galactose oligosaccharides, galactomannans and galactolipids.. Functionally, hydrolyzes a variety of simple alpha-D-galactoside as well as more complex molecules such as oligosaccharides and polysaccharides. This Aspergillus flavus (strain ATCC 200026 / FGSC A1120 / IAM 13836 / NRRL 3357 / JCM 12722 / SRRC 167) protein is Probable alpha-galactosidase D (aglD).